The primary structure comprises 173 residues: UPF0598 protein F59C6.12 (173 aa).

It belongs to the UPF0598 family.

This Caenorhabditis elegans protein is UPF0598 protein F59C6.12.